We begin with the raw amino-acid sequence, 122 residues long: Large ribosomal subunit protein uL14 (122 aa).

It belongs to the universal ribosomal protein uL14 family. As to quaternary structure, part of the 50S ribosomal subunit. Forms a cluster with proteins L3 and L19. In the 70S ribosome, L14 and L19 interact and together make contacts with the 16S rRNA in bridges B5 and B8.

In terms of biological role, binds to 23S rRNA. Forms part of two intersubunit bridges in the 70S ribosome. In Mycolicibacterium gilvum (strain PYR-GCK) (Mycobacterium gilvum (strain PYR-GCK)), this protein is Large ribosomal subunit protein uL14.